Here is a 666-residue protein sequence, read N- to C-terminus: Polyamine deacetylase HDAC10 (666 aa).

A histone deacetylase region spans residues 1–323; the sequence is MGTALVYHED…VCMMVQTLLG (323 aa). Residue His-135 is part of the active site.

It belongs to the histone deacetylase family. HD type 2 subfamily. In terms of assembly, interacts with HDAC3. Interacts with HDAC2 and NCOR2/SMRT. Interacts with HSPA8/HSC70. Interacts with MSH2. Widely expressed.

The protein localises to the cytoplasm. It is found in the nucleus. It carries out the reaction N(8)-acetylspermidine + H2O = spermidine + acetate. The enzyme catalyses N-acetylputrescine + H2O = putrescine + acetate. The catalysed reaction is N-acetylcadaverine + H2O = cadaverine + acetate. It catalyses the reaction N(6)-acetyl-L-lysyl-[protein] + H2O = L-lysyl-[protein] + acetate. In terms of biological role, polyamine deacetylase (PDAC), which acts preferentially on N(8)-acetylspermidine, and also on acetylcadaverine and acetylputrescine. Exhibits attenuated catalytic activity toward N(1),N(8)-diacetylspermidine and very low activity, if any, toward N(1)-acetylspermidine. Histone deacetylase activity has been observed in vitro. Has also been shown to be involved in MSH2 deacetylation. The physiological relevance of protein/histone deacetylase activity is unclear and could be very weak. May play a role in the promotion of late stages of autophagy, possibly autophagosome-lysosome fusion and/or lysosomal exocytosis in neuroblastoma cells. May play a role in homologous recombination. May promote DNA mismatch repair. This is Polyamine deacetylase HDAC10 (Hdac10) from Mus musculus (Mouse).